A 333-amino-acid polypeptide reads, in one-letter code: Flotillin-like protein FloA (333 aa).

A helical membrane pass occupies residues 10 to 30; it reads IFLIAGGIIFLVLFFHYVPFF.

Belongs to the flotillin-like FloA family. Homooligomerizes.

The protein localises to the cell membrane. It localises to the membrane raft. Its function is as follows. Found in functional membrane microdomains (FMM) that may be equivalent to eukaryotic membrane rafts. FMMs are highly dynamic and increase in number as cells age. Flotillins are thought to be important factors in membrane fluidity. In Bacteroides fragilis (strain ATCC 25285 / DSM 2151 / CCUG 4856 / JCM 11019 / LMG 10263 / NCTC 9343 / Onslow / VPI 2553 / EN-2), this protein is Flotillin-like protein FloA.